We begin with the raw amino-acid sequence, 128 residues long: Holo-[acyl-carrier-protein] synthase (128 aa).

2 residues coordinate Mg(2+): aspartate 10 and glutamate 59.

The protein belongs to the P-Pant transferase superfamily. AcpS family. Mg(2+) serves as cofactor.

The protein resides in the cytoplasm. It carries out the reaction apo-[ACP] + CoA = holo-[ACP] + adenosine 3',5'-bisphosphate + H(+). Functionally, transfers the 4'-phosphopantetheine moiety from coenzyme A to a Ser of acyl-carrier-protein. This Syntrophotalea carbinolica (strain DSM 2380 / NBRC 103641 / GraBd1) (Pelobacter carbinolicus) protein is Holo-[acyl-carrier-protein] synthase.